Reading from the N-terminus, the 184-residue chain is Oligoribonuclease (184 aa).

An Exonuclease domain is found at 7–170 (LIWIDLEMTG…DDIYESIEEL (164 aa)). The active site involves Tyr128.

Belongs to the oligoribonuclease family.

It localises to the cytoplasm. Its function is as follows. 3'-to-5' exoribonuclease specific for small oligoribonucleotides. In Hydrogenovibrio crunogenus (strain DSM 25203 / XCL-2) (Thiomicrospira crunogena), this protein is Oligoribonuclease.